Here is a 244-residue protein sequence, read N- to C-terminus: L-xylulose reductase (244 aa).

M1 is modified (N-acetylmethionine). 11–40 (LVTGAGKGIGRGTVQALHATGARVVAVSRT) provides a ligand contact to NADP(+). An Omega-N-methylarginine modification is found at R21. A Phosphoserine modification is found at S46. Substrate is bound at residue S136. Catalysis depends on Y149, which acts as the Proton acceptor. K153 is an NADP(+) binding site.

The protein belongs to the short-chain dehydrogenases/reductases (SDR) family. As to quaternary structure, homotetramer. Highly expressed in kidney, liver and epididymis. In the epididymis, it is mainly expressed in the proximal and distal sections of the corpus region. Weakly or not expressed in brain, lung, heart, spleen and testis.

Its subcellular location is the membrane. The enzyme catalyses xylitol + NADP(+) = L-xylulose + NADPH + H(+). Catalyzes the NADPH-dependent reduction of several pentoses, tetroses, trioses, alpha-dicarbonyl compounds and L-xylulose. Participates in the uronate cycle of glucose metabolism. May play a role in the water absorption and cellular osmoregulation in the proximal renal tubules by producing xylitol, an osmolyte, thereby preventing osmolytic stress from occurring in the renal tubules. This chain is L-xylulose reductase (DCXR), found in Homo sapiens (Human).